A 122-amino-acid chain; its full sequence is UPF0102 protein Smed_3545 (122 aa).

It belongs to the UPF0102 family.

The sequence is that of UPF0102 protein Smed_3545 from Sinorhizobium medicae (strain WSM419) (Ensifer medicae).